Reading from the N-terminus, the 550-residue chain is Mycosin-2 (550 aa).

The signal sequence occupies residues 1–33 (MASPLNRPGLRAAAASAALTLVALSANVPAAQA). The interval 34–62 (IPPPSVDPAMVPADARPGPDQPMRRSNSC) is disordered. The region spanning 79 to 490 (GFNLVNISKA…YGLVDPVAAL (412 aa)) is the Peptidase S8 domain. Active-site charge relay system residues include aspartate 103 and histidine 133. The segment covering 168 to 190 (PPVTAAPAPPVEVPPPMPPPPPV) has biased composition (pro residues). The interval 168–236 (PPVTAAPAPP…PPPPPGAPDG (69 aa)) is disordered. The Charge relay system role is filled by serine 435. The helical transmembrane segment at 524-544 (NIAIGFVGAVATGVLAMAIGA) threads the bilayer.

Belongs to the peptidase S8 family.

The protein localises to the cell membrane. The sequence is that of Mycosin-2 from Mycobacterium tuberculosis (strain ATCC 25618 / H37Rv).